Reading from the N-terminus, the 205-residue chain is Putative 3-methyladenine DNA glycosylase (205 aa).

Belongs to the DNA glycosylase MPG family.

In Bacillus cereus (strain ZK / E33L), this protein is Putative 3-methyladenine DNA glycosylase.